A 251-amino-acid polypeptide reads, in one-letter code: HTH-type transcriptional regulator UlaR (251 aa).

The HTH deoR-type domain occupies 3–58 (EAQRHQILLDMLAQLGFVTVENVIERLGISPATARRDINKLDESGKLKKVRNGAEA). A DNA-binding region (H-T-H motif) is located at residues 20–39 (VTVENVIERLGISPATARRD).

It is found in the cytoplasm. Its function is as follows. Represses ulaG and the ulaABCDEF operon. This is HTH-type transcriptional regulator UlaR from Salmonella agona (strain SL483).